The chain runs to 394 residues: MGSFGMLSRRTLGTDMPVMAQIRSLMAELTNPMSLAQGVVHWQPPQKALEKVKELVWDPIISSYGPDEGLPELRQALLKKLREENKLTNSQVMVTAGANQAFVNLVITLCDAGDSVVMFEPYYFNSYMAFQMTGVTNIIVGPGQSDTLYPDADWLERTLSESKPTPKVVTVVNPGNPSGTYVPEPLLKRIAQICKDAGCWLIVDNTYEYFMYDGLKHCCVEGDHIVNVFSFSKTYGMMGWRLGYIAYSERLDGFATELVKIQDNIPICAAIISQRLAVYALEEGSGWITERVKSLVKNRDIVKEALEPLGKENVKGGEGAIYLWAKLPEGHRDDFKVVRWLAHRHGVVVIPGCASGSPGYLRVSFGGLQEVEMRAAAARLRKGIEELLHHGMVE.

Gly2 is modified (N-acetylglycine). Position 38 (Gly38) interacts with substrate. Residues Tyr64, 98 to 99, Tyr123, Asn176, Tyr207, and 230 to 232 contribute to the pyridoxal 5'-phosphate site; these read AN and SFS. Tyr123 and Asn176 together coordinate substrate. N6-(pyridoxal phosphate)lysine is present on Lys233. Arg241 lines the pyridoxal 5'-phosphate pocket. Positions 362 and 374 each coordinate substrate.

It belongs to the class-I pyridoxal-phosphate-dependent aminotransferase family. Homodimer. Pyridoxal 5'-phosphate serves as cofactor. In terms of tissue distribution, expressed in roots, cotyledons and flowers.

It localises to the cytoplasm. It carries out the reaction a 2-oxocarboxylate + L-methionine = 4-methylsulfanyl-2-oxobutanoate + an L-alpha-amino acid. The catalysed reaction is L-tryptophan + 2-oxoglutarate = indole-3-pyruvate + L-glutamate. It catalyses the reaction L-tyrosine + 2-oxoglutarate = 3-(4-hydroxyphenyl)pyruvate + L-glutamate. Coordinates and prevents auxin (IAA) and ethylene biosynthesis, thus regulating auxin homeostasis in young seedlings. Shows aminotransferase activity with methionine; can use the ethylene biosynthetic intermediate L-methionine (L-Met) as an amino donor and the auxin biosynthetic intermediate, indole-3-pyruvic acid (3-IPA) as an amino acceptor to produce L-tryptophan (L-Trp) and 2-oxo-4-methylthiobutyric acid (KMBA). Can also use tryptophan (Trp), phenylalanine (Phe), and tyrosine (Tyr) as substrates. Regulates tryptophan (Trp) homeostasis and catabolism in mature plants. Also possibly involved in the metabolism of other aromatic amino acids and phenylpropanoid homeostasis. This is Aromatic aminotransferase ISS1 from Arabidopsis thaliana (Mouse-ear cress).